A 370-amino-acid chain; its full sequence is MATKLEAFINDLRLQCETNDTTKYVSIVLFCEKETTLKLFFQYIDGIDTNSEPKLAVLSPTLSPVGYYTKEITTEDGWQVILNITCIPPPWKSSSIDLLPSILKSDPEKSSKRFVLLLDWINEDQSYWLEDIEGLFVQLKQVSPETKAAGSVMMLHSDYCKHLENTHTKWSSTAIDFMHQSLRTLALHLKISLYSDLKNSVLAAKSAVGVPLSTEEQKSLIDMVNLENVNVTYGSDSLNKIAMIDENFPLSVYKDNLSTLKHDFSDVIPEIKPRNMGSCAITEPIKPLPDLQSLIPDVQGQLSHLYELQRKNSSLKRVTNQPAVVQDIGQDNTMALNDIASDNNHLQHVPDDDSALDSLVHGIVQRHQIS.

It belongs to the dynein light intermediate chain DYN3 family. The cytoplasmic dynein is composed of at least two heavy chains and a number of intermediate and light chains.

Its subcellular location is the cytoplasm. It is found in the cytoskeleton. Its function is as follows. Component of the cytoplasmic dynein which acts as a motor for the intracellular retrograde motility of vesicles and organelles along microtubules. May play an important role in the proper orientation of the mitotic spindle into the budding daughter cell yeast. Probably required for normal progression of the cell cycle. The chain is Cytoplasmic dynein intermediate light chain DYN3 (DYN3) from Kluyveromyces lactis (strain ATCC 8585 / CBS 2359 / DSM 70799 / NBRC 1267 / NRRL Y-1140 / WM37) (Yeast).